Consider the following 115-residue polypeptide: uncharacterized protein (115 aa).

This is an uncharacterized protein from Acidianus filamentous virus 1 (isolate United States/Yellowstone) (AFV-1).